Reading from the N-terminus, the 205-residue chain is Probable DNA-binding protein (205 aa).

The disordered stretch occupies residues 140 to 168; the sequence is GEGDGAPRPACPDFSTRGAETGNQGVQPG.

This Homo sapiens (Human) protein is Probable DNA-binding protein.